Reading from the N-terminus, the 163-residue chain is Nucleotide-binding protein BC_1159 (163 aa).

This sequence belongs to the YajQ family.

In terms of biological role, nucleotide-binding protein. This Bacillus cereus (strain ATCC 14579 / DSM 31 / CCUG 7414 / JCM 2152 / NBRC 15305 / NCIMB 9373 / NCTC 2599 / NRRL B-3711) protein is Nucleotide-binding protein BC_1159.